An 897-amino-acid chain; its full sequence is Macoilin (897 aa).

4 helical membrane passes run 113–133, 157–177, 181–201, and 204–224; these read ICYL…YVWI, QSWP…FLRI, PILI…PVWP, and LNAF…TVSM. Composition is skewed to polar residues over residues 291–304 and 329–338; these read IQAA…SSKK and GNSGFNSTPP. The interval 291–375 is disordered; that stretch reads IQAASATPPT…DTSSSTIEDQ (85 aa). The span at 351–361 shows a compositional bias: acidic residues; the sequence is DMDDGDDSDDD. Residues 379 to 399 form a helical membrane-spanning segment; it reads GGISIIRFIFSSAAWLFSFVF. Residues 403–413 are compositionally biased toward polar residues; the sequence is TPSENSLSNQQ. Disordered regions lie at residues 403 to 535 and 724 to 770; these read TPSE…QEED and NGSS…SPVP. The span at 414 to 424 shows a compositional bias: acidic residues; the sequence is IDDDEDYEDGD. Polar residues predominate over residues 432 to 451; it reads TDSMTSTTKGRANTMPSTTR. Composition is skewed to low complexity over residues 452–467 and 475–490; these read SQNN…QSNG and SHQN…SNGH. The stretch at 503-726 forms a coiled coil; it reads DTNASNETDI…VQEFQIKNGS (224 aa). Basic and acidic residues predominate over residues 510 to 535; it reads TDIRSMSRELESLRSEISSRRSQEED. A compositionally biased stretch (polar residues) spans 734-761; the sequence is ETLMNGRSSTEANNENDTTASDQSSPHQ.

Strong expression in many neurons, very weak expression is also detected in others tissues.

It is found in the rough endoplasmic reticulum membrane. The protein resides in the nucleus membrane. Functionally, plays a role in the regulation of neuronal activity. In AWA and AWC neurons, plays a role in regulating olfactory adaptation by controlling the forgetting sensory responses to odorants such as diacetyl and isoamyl alcohol. May play a role in regulating daf-7 expression in ASI neurons in response to bacterial small RNAs. In ASI neurons, promotes dauer formation in response to pheromones such as the ascarosides ascr#2 and ascr#3. This is Macoilin from Caenorhabditis elegans.